The primary structure comprises 362 residues: Bifunctional nitrilase/nitrile hydratase NIT4 (362 aa).

One can recognise a CN hydrolase domain in the interval 31–307; it reads VRATVVQAST…EALITADLDL (277 aa). The active-site Proton acceptor is the glutamate 71. The active-site Proton donor is the lysine 162. Residue cysteine 196 is the Nucleophile of the active site.

The protein belongs to the carbon-nitrogen hydrolase superfamily. Nitrilase family.

The catalysed reaction is a nitrile + 2 H2O = a carboxylate + NH4(+). The enzyme catalyses 3-cyano-L-alanine + 2 H2O = L-aspartate + NH4(+). Functionally, highly specific for beta-cyano-L-alanine (Ala(CN)). Low activity with 3-phenylpropionitrile (PPN). Not associated with auxin production but may be involved in cyanide detoxification. This Oryza sativa subsp. japonica (Rice) protein is Bifunctional nitrilase/nitrile hydratase NIT4 (NIT4).